We begin with the raw amino-acid sequence, 248 residues long: Lysine-rich arabinogalactan protein 19 (248 aa).

A signal peptide spans 1-24 (MESNSIIWSLLLASALISSFSVNA). Low complexity predominate over residues 25–37 (QGPAASPVTSTTT). A disordered region spans residues 25–221 (QGPAASPVTS…APSPNTNGGN (197 aa)). 3 stretches are compositionally biased toward pro residues: residues 38–57 (APPP…PTTT), 67–86 (PASP…PAPK), and 94–171 (ATPP…PAPA). The segment covering 173 to 187 (TKHKRKHKHKRHHHA) has biased composition (basic residues). Residues 189–203 (APAPIPPSPPSPPVL) are compositionally biased toward pro residues. S196 carries GPI-anchor amidated serine lipidation. The propeptide at 197–248 (PPSPPVLTDPQDTAPAPSPNTNGGNALNQLKGRAVMWLNTGLVILFLLAMTA) is removed in mature form.

The protein belongs to the lysine-rich AGP family. Post-translationally, O-glycosylated on the hydroxyproline residues. As to expression, strongly expressed in stems, moderately expressed in flowers and roots and weakly expressed in young leaves.

It localises to the cell membrane. Functionally, proteoglycan that seems to be implicated in diverse developmental roles such as differentiation, cell-cell recognition, embryogenesis and programmed cell death. The chain is Lysine-rich arabinogalactan protein 19 (AGP19) from Arabidopsis thaliana (Mouse-ear cress).